The sequence spans 440 residues: 3-phosphoshikimate 1-carboxyvinyltransferase (440 aa).

Lys-28, Ser-29, and Arg-33 together coordinate 3-phosphoshikimate. Residue Lys-28 coordinates phosphoenolpyruvate. The phosphoenolpyruvate site is built by Gly-98 and Arg-126. Residues Ser-171, Gln-173, Asp-318, and Lys-345 each contribute to the 3-phosphoshikimate site. Gln-173 lines the phosphoenolpyruvate pocket. The active-site Proton acceptor is the Asp-318. Residues Arg-349 and Arg-391 each contribute to the phosphoenolpyruvate site.

This sequence belongs to the EPSP synthase family. Monomer.

The protein resides in the cytoplasm. The catalysed reaction is 3-phosphoshikimate + phosphoenolpyruvate = 5-O-(1-carboxyvinyl)-3-phosphoshikimate + phosphate. It participates in metabolic intermediate biosynthesis; chorismate biosynthesis; chorismate from D-erythrose 4-phosphate and phosphoenolpyruvate: step 6/7. Functionally, catalyzes the transfer of the enolpyruvyl moiety of phosphoenolpyruvate (PEP) to the 5-hydroxyl of shikimate-3-phosphate (S3P) to produce enolpyruvyl shikimate-3-phosphate and inorganic phosphate. The polypeptide is 3-phosphoshikimate 1-carboxyvinyltransferase (Anaeromyxobacter sp. (strain K)).